The primary structure comprises 204 residues: Proteasome subunit beta type-3-A (204 aa).

It belongs to the peptidase T1B family. In terms of assembly, component of the 20S core complex of the 26S proteasome. The 26S proteasome is composed of a core protease (CP), known as the 20S proteasome, capped at one or both ends by the 19S regulatory particle (RP/PA700). The 20S proteasome core is composed of 28 subunits that are arranged in four stacked rings, resulting in a barrel-shaped structure. The two end rings are each formed by seven alpha subunits, and the two central rings are each formed by seven beta subunits. The catalytic chamber with the active sites is on the inside of the barrel.

It localises to the cytoplasm. It is found in the nucleus. Its function is as follows. Non-catalytic component of the proteasome, a multicatalytic proteinase complex which is characterized by its ability to cleave peptides with Arg, Phe, Tyr, Leu, and Glu adjacent to the leaving group at neutral or slightly basic pH. The proteasome has an ATP-dependent proteolytic activity. This is Proteasome subunit beta type-3-A (PBC1) from Arabidopsis thaliana (Mouse-ear cress).